We begin with the raw amino-acid sequence, 193 residues long: 7-methyl-GTP pyrophosphatase (193 aa).

The active-site Proton acceptor is the aspartate 70.

The protein belongs to the Maf family. YceF subfamily. It depends on a divalent metal cation as a cofactor.

The protein resides in the cytoplasm. The catalysed reaction is N(7)-methyl-GTP + H2O = N(7)-methyl-GMP + diphosphate + H(+). Nucleoside triphosphate pyrophosphatase that hydrolyzes 7-methyl-GTP (m(7)GTP). May have a dual role in cell division arrest and in preventing the incorporation of modified nucleotides into cellular nucleic acids. The chain is 7-methyl-GTP pyrophosphatase from Vibrio cholerae serotype O1 (strain ATCC 39315 / El Tor Inaba N16961).